A 401-amino-acid polypeptide reads, in one-letter code: Exodeoxyribonuclease 7 large subunit (401 aa).

It belongs to the XseA family. In terms of assembly, heterooligomer composed of large and small subunits.

It is found in the cytoplasm. It catalyses the reaction Exonucleolytic cleavage in either 5'- to 3'- or 3'- to 5'-direction to yield nucleoside 5'-phosphates.. Bidirectionally degrades single-stranded DNA into large acid-insoluble oligonucleotides, which are then degraded further into small acid-soluble oligonucleotides. The chain is Exodeoxyribonuclease 7 large subunit from Lachnoclostridium phytofermentans (strain ATCC 700394 / DSM 18823 / ISDg) (Clostridium phytofermentans).